A 247-amino-acid chain; its full sequence is 2,3-bisphosphoglycerate-dependent phosphoglycerate mutase (247 aa).

Substrate-binding positions include Arg8 to Asn15, Thr21 to Gly22, Arg60, Glu87 to Tyr90, Lys98, Arg114 to Arg115, and Gly183 to Asn184. The active-site Tele-phosphohistidine intermediate is the His9. Glu87 acts as the Proton donor/acceptor in catalysis.

Belongs to the phosphoglycerate mutase family. BPG-dependent PGAM subfamily. As to quaternary structure, homodimer.

It carries out the reaction (2R)-2-phosphoglycerate = (2R)-3-phosphoglycerate. It participates in carbohydrate degradation; glycolysis; pyruvate from D-glyceraldehyde 3-phosphate: step 3/5. Its function is as follows. Catalyzes the interconversion of 2-phosphoglycerate and 3-phosphoglycerate. The polypeptide is 2,3-bisphosphoglycerate-dependent phosphoglycerate mutase (Albidiferax ferrireducens (strain ATCC BAA-621 / DSM 15236 / T118) (Rhodoferax ferrireducens)).